The chain runs to 156 residues: Protein US1 (156 aa).

Disordered regions lie at residues 90-114 and 133-156; these read RSRSRTAESGRSSSSSSVSVLSDGD and ARRWTQRHDSEERASQQAKNDSTS. The segment covering 96–111 has biased composition (low complexity); sequence AESGRSSSSSSVSVLS. The segment covering 147 to 156 has biased composition (polar residues); it reads SQQAKNDSTS.

The protein is Protein US1 (US1) of Homo sapiens (Human).